Here is a 358-residue protein sequence, read N- to C-terminus: 3-isopropylmalate dehydrogenase (358 aa).

Residues Arg-92, Arg-102, Arg-130, and Asp-224 each contribute to the substrate site. Mg(2+) contacts are provided by Asp-224, Asp-248, and Asp-252. Residue 282–294 (GSAPDIAGQGIAN) participates in NAD(+) binding.

The protein belongs to the isocitrate and isopropylmalate dehydrogenases family. LeuB type 1 subfamily. As to quaternary structure, homodimer. Requires Mg(2+) as cofactor. Mn(2+) is required as a cofactor.

The protein resides in the cytoplasm. It carries out the reaction (2R,3S)-3-isopropylmalate + NAD(+) = 4-methyl-2-oxopentanoate + CO2 + NADH. Its pathway is amino-acid biosynthesis; L-leucine biosynthesis; L-leucine from 3-methyl-2-oxobutanoate: step 3/4. Its function is as follows. Catalyzes the oxidation of 3-carboxy-2-hydroxy-4-methylpentanoate (3-isopropylmalate) to 3-carboxy-4-methyl-2-oxopentanoate. The product decarboxylates to 4-methyl-2 oxopentanoate. The protein is 3-isopropylmalate dehydrogenase of Bordetella parapertussis (strain 12822 / ATCC BAA-587 / NCTC 13253).